A 64-amino-acid chain; its full sequence is Large ribosomal subunit protein bL35 (64 aa).

It belongs to the bacterial ribosomal protein bL35 family.

This Shewanella loihica (strain ATCC BAA-1088 / PV-4) protein is Large ribosomal subunit protein bL35.